Here is a 178-residue protein sequence, read N- to C-terminus: UPF0228 protein MM_0401 (178 aa).

It belongs to the UPF0228 family.

In Methanosarcina mazei (strain ATCC BAA-159 / DSM 3647 / Goe1 / Go1 / JCM 11833 / OCM 88) (Methanosarcina frisia), this protein is UPF0228 protein MM_0401.